The following is a 411-amino-acid chain: S-inosyl-L-homocysteine hydrolase (411 aa).

Substrate is bound by residues Asp121 and Glu146. NAD(+) is bound at residue 147–149 (TTT). Lys176 and Asp180 together coordinate substrate. NAD(+)-binding positions include Asn181, 210–215 (GYGWCG), Glu233, Asn268, 289–291 (SGH), and Asn335.

Belongs to the adenosylhomocysteinase family. NAD(+) is required as a cofactor.

It is found in the cytoplasm. It catalyses the reaction S-inosyl-L-homocysteine + H2O = L-homocysteine + inosine. The protein operates within amino-acid biosynthesis; S-adenosyl-L-methionine biosynthesis. Functionally, catalyzes the hydrolysis of S-inosyl-L-homocysteine (SIH) to L-homocysteine (Hcy) and inosine. Likely functions in a S-adenosyl-L-methionine (SAM) recycling pathway from S-adenosyl-L-homocysteine (SAH) produced from SAM-dependent methylation reactions. Can also catalyze the reverse reaction in vitro, i.e. the synthesis of SIH from Hcy and inosine. This Methanosarcina acetivorans (strain ATCC 35395 / DSM 2834 / JCM 12185 / C2A) protein is S-inosyl-L-homocysteine hydrolase.